The primary structure comprises 61 residues: Small ribosomal subunit protein uS14 (61 aa).

Positions 24, 27, 40, and 43 each coordinate Zn(2+).

The protein belongs to the universal ribosomal protein uS14 family. Zinc-binding uS14 subfamily. Part of the 30S ribosomal subunit. Contacts proteins S3 and S10. Zn(2+) is required as a cofactor.

Binds 16S rRNA, required for the assembly of 30S particles and may also be responsible for determining the conformation of the 16S rRNA at the A site. The sequence is that of Small ribosomal subunit protein uS14 from Streptococcus thermophilus (strain ATCC BAA-491 / LMD-9).